Reading from the N-terminus, the 96-residue chain is Small ribosomal subunit protein bS6 (96 aa).

The protein belongs to the bacterial ribosomal protein bS6 family.

In terms of biological role, binds together with bS18 to 16S ribosomal RNA. This is Small ribosomal subunit protein bS6 from Beutenbergia cavernae (strain ATCC BAA-8 / DSM 12333 / CCUG 43141 / JCM 11478 / NBRC 16432 / NCIMB 13614 / HKI 0122).